The following is a 177-amino-acid chain: Large ribosomal subunit protein uL6 (177 aa).

It belongs to the universal ribosomal protein uL6 family. In terms of assembly, part of the 50S ribosomal subunit.

Its function is as follows. This protein binds to the 23S rRNA, and is important in its secondary structure. It is located near the subunit interface in the base of the L7/L12 stalk, and near the tRNA binding site of the peptidyltransferase center. The chain is Large ribosomal subunit protein uL6 from Methylobacterium sp. (strain 4-46).